The chain runs to 185 residues: Ribosome-recycling factor (185 aa).

This sequence belongs to the RRF family.

Its subcellular location is the cytoplasm. Responsible for the release of ribosomes from messenger RNA at the termination of protein biosynthesis. May increase the efficiency of translation by recycling ribosomes from one round of translation to another. The sequence is that of Ribosome-recycling factor from Shewanella frigidimarina (strain NCIMB 400).